Reading from the N-terminus, the 310-residue chain is Putative S-adenosyl-L-methionine-dependent methyltransferase MUL_4762 (310 aa).

S-adenosyl-L-methionine contacts are provided by residues Asp-132 and 161-162 (DL).

This sequence belongs to the UPF0677 family.

Functionally, exhibits S-adenosyl-L-methionine-dependent methyltransferase activity. The protein is Putative S-adenosyl-L-methionine-dependent methyltransferase MUL_4762 of Mycobacterium ulcerans (strain Agy99).